The sequence spans 128 residues: Cystatin-1 (128 aa).

A signal peptide spans 1 to 17 (MIRSAVVLTVLVGVCLA). In terms of domain architecture, Cystatin spans 20-128 (GFVGGWSQVD…TKEVTSFECN (109 aa)). 2 disulfides stabilise this stretch: Cys-84-Cys-96 and Cys-107-Cys-127.

The protein belongs to the cystatin family. Mainly expressed in gut.

The protein localises to the secreted. In terms of biological role, inhibitor of cysteine proteinases. Strongly inhibits mammalian cathepsin B and H, and moderately inhibits mammalian cathepsin C. Also inhibits endogenous cathepsin B-like but not cathepsin C-like proteinases. May have a protective role against undesired digestion of a stored blood meal by endogenous peptidases. This chain is Cystatin-1, found in Ornithodoros moubata (Soft tick).